The primary structure comprises 230 residues: MQGLTERQQQVLHYIRQSISERGYPPTLREIGAHMGIRSTNGVNDHLRALERKGYLTREDMKSRALRPRDLDGAGAGGGADLRGALVNGGNDAPANDQEDDLVEIAVVGRIAAGLPILAEEHVLDTVRIERTLVRGGREVFGLRVTGDSMIEAGIFSGDYIFVRRQLTAQRGDIVVALIGDEATVKYFFPEKDYVRFQPANAAMAPILVRASDFKPAMLLGVVVGVYRKL.

A DNA-binding region (H-T-H motif) is located at residues 28–48 (LREIGAHMGIRSTNGVNDHLR). Catalysis depends on for autocatalytic cleavage activity residues Ser-149 and Lys-186.

The protein belongs to the peptidase S24 family. As to quaternary structure, homodimer.

The enzyme catalyses Hydrolysis of Ala-|-Gly bond in repressor LexA.. Functionally, represses a number of genes involved in the response to DNA damage (SOS response), including recA and lexA. In the presence of single-stranded DNA, RecA interacts with LexA causing an autocatalytic cleavage which disrupts the DNA-binding part of LexA, leading to derepression of the SOS regulon and eventually DNA repair. This is LexA repressor from Sorangium cellulosum (strain So ce56) (Polyangium cellulosum (strain So ce56)).